The sequence spans 373 residues: XK-related protein 9 (373 aa).

8 helical membrane passes run 8-28 (FMMSVLGIIIYVTDLIVDIWV), 38-58 (YVFSALALSFMLFGTLVAQCF), 166-186 (AAIMVSCCAISWSTVDYQVAL), 203-223 (ITYLFYKLFTLLSWMLSVVLL), 224-244 (LFLNVKIALFLLLFLWLLGII), 256-276 (CISMEFLYRIVVGFILIFTFF), 295-315 (VLGTLGILTVFWVCPLNIFNP), and 318-338 (FIPISITIVLTLLLGILFLIV).

Belongs to the XK family. Undergoes proteolytic processing by caspase-3 (CASP3), caspase-6 (CASP6) and caspase-7 (CASP7) to generate the XK-related protein 9, processed form, leading to its activation.

It localises to the cell membrane. The catalysed reaction is a 1,2-diacyl-sn-glycero-3-phospho-L-serine(in) = a 1,2-diacyl-sn-glycero-3-phospho-L-serine(out). Activated upon caspase cleavage to generate the XK-related protein 9, processed form. Does not act prior the onset of apoptosis. Its function is as follows. Phospholipid scramblase that promotes phosphatidylserine exposure on apoptotic cell surface. Phosphatidylserine is a specific marker only present at the surface of apoptotic cells and acts as a specific signal for engulfment. This chain is XK-related protein 9, found in Pan troglodytes (Chimpanzee).